Here is a 281-residue protein sequence, read N- to C-terminus: Putative thiosulfate sulfurtransferase (281 aa).

2 consecutive Rhodanese domains span residues 18–125 (NTDG…ELTK) and 154–274 (AIGN…VPIE). Residue Cys-233 is the Cysteine persulfide intermediate of the active site. Arg-238 lines the substrate pocket.

It carries out the reaction thiosulfate + hydrogen cyanide = thiocyanate + sulfite + 2 H(+). In terms of biological role, may be a sulfotransferase involved in the formation of thiosulfate. In Saccharopolyspora erythraea (Streptomyces erythraeus), this protein is Putative thiosulfate sulfurtransferase (cysA).